A 218-amino-acid chain; its full sequence is Large ribosomal subunit protein uL4 (218 aa).

The tract at residues 54–106 is disordered; the sequence is GTHAVKNRGAVSGGGRKPWKQKGTGRARQGSIRAPQWYHGGVAHGPVPRDYSQ.

The protein belongs to the universal ribosomal protein uL4 family. In terms of assembly, part of the 50S ribosomal subunit.

In terms of biological role, one of the primary rRNA binding proteins, this protein initially binds near the 5'-end of the 23S rRNA. It is important during the early stages of 50S assembly. It makes multiple contacts with different domains of the 23S rRNA in the assembled 50S subunit and ribosome. Its function is as follows. Forms part of the polypeptide exit tunnel. This chain is Large ribosomal subunit protein uL4, found in Bifidobacterium animalis subsp. lactis (strain AD011).